We begin with the raw amino-acid sequence, 140 residues long: Sex-regulated protein janus-B (140 aa).

R42 contacts substrate. Residue H69 is the Proton acceptor of the active site. Residue 110–112 (CKT) coordinates substrate.

The protein belongs to the janus family.

Functionally, janA and janB regulate somatic sex differentiation. The polypeptide is Sex-regulated protein janus-B (janB) (Drosophila pseudoobscura pseudoobscura (Fruit fly)).